A 479-amino-acid chain; its full sequence is Poly(A) polymerase catalytic subunit (479 aa).

Residues Asp-202 and Asp-204 contribute to the active site. Ca(2+) is bound by residues Asp-202, Asp-204, and Asp-253.

It belongs to the poxviridae poly(A) polymerase catalytic subunit family. Heterodimer of a large (catalytic) subunit and a small (regulatory) subunit.

It carries out the reaction RNA(n) + ATP = RNA(n)-3'-adenine ribonucleotide + diphosphate. Functionally, polymerase that creates the 3'-poly(A) tail of mRNA's. This Bos taurus (Bovine) protein is Poly(A) polymerase catalytic subunit (OPG063).